Here is a 1434-residue protein sequence, read N- to C-terminus: DNA-directed RNA polymerase subunit beta (1434 aa).

The protein belongs to the RNA polymerase beta chain family. As to quaternary structure, the RNAP catalytic core consists of 2 alpha, 1 beta, 1 beta' and 1 omega subunit. When a sigma factor is associated with the core the holoenzyme is formed, which can initiate transcription.

The enzyme catalyses RNA(n) + a ribonucleoside 5'-triphosphate = RNA(n+1) + diphosphate. Functionally, DNA-dependent RNA polymerase catalyzes the transcription of DNA into RNA using the four ribonucleoside triphosphates as substrates. The polypeptide is DNA-directed RNA polymerase subunit beta (Ureaplasma parvum serovar 3 (strain ATCC 27815 / 27 / NCTC 11736)).